The chain runs to 249 residues: Small ribosomal subunit protein uS3y (249 aa).

The region spanning 21 to 92 (LNEVLTRELA…SVELYAEKVN (72 aa)) is the KH type-2 domain. Residue serine 212 is modified to Phosphoserine.

Belongs to the universal ribosomal protein uS3 family.

This chain is Small ribosomal subunit protein uS3y (RPS3B), found in Arabidopsis thaliana (Mouse-ear cress).